Reading from the N-terminus, the 729-residue chain is Fatty acid oxidation complex subunit alpha (729 aa).

Residues 1 to 189 are enoyl-CoA hydratase/isomerase; that stretch reads MLYKGDTLYL…KIGLVDGVVA (189 aa). D296 provides a ligand contact to substrate. The 3-hydroxyacyl-CoA dehydrogenase stretch occupies residues 311 to 729; it reads ETPKHAAVLG…ARPVGALKTA (419 aa). Residues M324, D343, 400-402, K407, and S429 contribute to the NAD(+) site; that span reads VVE. The active-site For 3-hydroxyacyl-CoA dehydrogenase activity is the H450. Residue N453 participates in NAD(+) binding. The substrate site is built by N500 and Y660.

This sequence in the N-terminal section; belongs to the enoyl-CoA hydratase/isomerase family. The protein in the C-terminal section; belongs to the 3-hydroxyacyl-CoA dehydrogenase family. Heterotetramer of two alpha chains (FadB) and two beta chains (FadA).

It catalyses the reaction a (3S)-3-hydroxyacyl-CoA + NAD(+) = a 3-oxoacyl-CoA + NADH + H(+). The catalysed reaction is a (3S)-3-hydroxyacyl-CoA = a (2E)-enoyl-CoA + H2O. It carries out the reaction a 4-saturated-(3S)-3-hydroxyacyl-CoA = a (3E)-enoyl-CoA + H2O. The enzyme catalyses (3S)-3-hydroxybutanoyl-CoA = (3R)-3-hydroxybutanoyl-CoA. It catalyses the reaction a (3Z)-enoyl-CoA = a 4-saturated (2E)-enoyl-CoA. The catalysed reaction is a (3E)-enoyl-CoA = a 4-saturated (2E)-enoyl-CoA. It functions in the pathway lipid metabolism; fatty acid beta-oxidation. Its function is as follows. Involved in the aerobic and anaerobic degradation of long-chain fatty acids via beta-oxidation cycle. Catalyzes the formation of 3-oxoacyl-CoA from enoyl-CoA via L-3-hydroxyacyl-CoA. It can also use D-3-hydroxyacyl-CoA and cis-3-enoyl-CoA as substrate. The polypeptide is Fatty acid oxidation complex subunit alpha (Klebsiella pneumoniae subsp. pneumoniae (strain ATCC 700721 / MGH 78578)).